A 772-amino-acid chain; its full sequence is Bromo adjacent homology domain-containing 1 protein (772 aa).

2 disordered regions span residues 1–63 and 77–117; these read MTHT…RSLV and LENV…PRKR. Serine 8 is subject to Phosphoserine. The span at 49-61 shows a compositional bias: basic residues; the sequence is TGRRKNYPLRKRS. 2 positions are modified to phosphoserine: serine 101 and serine 121. Disordered regions lie at residues 131–357, 521–582, and 723–743; these read LLER…PADY, QTVA…RTNG, and PSRKTALVPPSADYSTPPHRT. 3 stretches are compositionally biased toward basic and acidic residues: residues 147-158, 170-182, and 189-199; these read RGGDPHRSRDRA, RLGDLGEGSRDLS, and EGARRDGDPAP. Residue serine 182 is modified to Phosphoserine. Serine 204 bears the Phosphoserine mark. Residues 280–289 are compositionally biased toward pro residues; the sequence is SAPPHGPPTQ. Low complexity predominate over residues 299–310; it reads LENPLRPNLPLL. Pro residues predominate over residues 340-352; sequence FPAPQLSPLPMPG. The span at 536 to 548 shows a compositional bias: polar residues; the sequence is GSKSGLRTGSSCR. The segment covering 549-580 has biased composition (basic residues); sequence HTVRSKAARRPSHPKQPRAQRPRPRRRRRRRT. Threonine 580 carries the post-translational modification Phosphothreonine. In terms of domain architecture, BAH spans 616–771; the sequence is ETIRVRDTVL…FRHGRILKNP (156 aa).

As to quaternary structure, interacts with CBX5 (HP1 alpha), HDAC5, MBD1 and SP1. Post-translationally, ubiquitinated in a FBXO11-dependent manner; leading to degradation.

The protein localises to the nucleus. It is found in the chromosome. Functionally, heterochromatin protein that acts as a transcription repressor and has the ability to promote the formation of large heterochromatic domains. May act by recruiting heterochromatin proteins such as CBX5 (HP1 alpha), HDAC5 and MBD1. Represses IGF2 expression by binding to its CpG-rich P3 promoter and recruiting heterochromatin proteins. The protein is Bromo adjacent homology domain-containing 1 protein (Bahd1) of Mus musculus (Mouse).